The following is a 561-amino-acid chain: Putative transport protein YbjL (561 aa).

The next 5 membrane-spanning stretches (helical) occupy residues 8–28 (LLNG…LCLG), 32–52 (LGSI…LLGQ), 66–86 (FMLF…SIFF), 94–114 (MLAL…GKLF), and 158–178 (NLSL…IVGA). 2 RCK C-terminal domains span residues 200–288 (RGLD…SFRN) and 292–373 (VFDR…RIGF). A run of 5 helical transmembrane segments spans residues 383 to 403 (LLAF…TFQF), 406 to 426 (FSFG…LGFM), 451 to 471 (VFMA…LGAI), 475 to 495 (MLIA…LFGA), and 540 to 560 (AIAN…WPGL).

Belongs to the AAE transporter (TC 2.A.81) family. YbjL subfamily.

Its subcellular location is the cell membrane. The polypeptide is Putative transport protein YbjL (Shigella boydii serotype 4 (strain Sb227)).